A 334-amino-acid polypeptide reads, in one-letter code: L-lactate dehydrogenase (334 aa).

A disordered region spans residues 1–22 (MASTKGKLIHEMVPSKERDPPH). Basic and acidic residues predominate over residues 8-22 (LIHEMVPSKERDPPH). NAD(+)-binding positions include 31–59 (GQVG…VEDR) and Arg-101. Positions 108, 140, and 171 each coordinate substrate. Residue Asn-140 participates in NAD(+) binding. The Proton acceptor role is filled by His-195. Thr-250 lines the substrate pocket.

Belongs to the LDH/MDH superfamily. LDH family. As to quaternary structure, homotetramer.

It is found in the cytoplasm. The catalysed reaction is (S)-lactate + NAD(+) = pyruvate + NADH + H(+). The protein operates within fermentation; pyruvate fermentation to lactate; (S)-lactate from pyruvate: step 1/1. The protein is L-lactate dehydrogenase of Petromyzon marinus (Sea lamprey).